The primary structure comprises 295 residues: Tyrosine recombinase XerD (295 aa).

One can recognise a Core-binding (CB) domain in the interval 1–85 (MDTIIEEYLK…TIRSFHQFAL (85 aa)). One can recognise a Tyr recombinase domain in the interval 106–289 (KLPDVLEINE…SKSQIRKMYN (184 aa)). Residues Arg146, Lys170, His241, Arg244, and His267 contribute to the active site. The active-site O-(3'-phospho-DNA)-tyrosine intermediate is Tyr276.

Belongs to the 'phage' integrase family. XerD subfamily. Forms a cyclic heterotetrameric complex composed of two molecules of XerC and two molecules of XerD.

The protein localises to the cytoplasm. Site-specific tyrosine recombinase, which acts by catalyzing the cutting and rejoining of the recombining DNA molecules. The XerC-XerD complex is essential to convert dimers of the bacterial chromosome into monomers to permit their segregation at cell division. It also contributes to the segregational stability of plasmids. This Staphylococcus saprophyticus subsp. saprophyticus (strain ATCC 15305 / DSM 20229 / NCIMB 8711 / NCTC 7292 / S-41) protein is Tyrosine recombinase XerD.